The chain runs to 224 residues: MASESDRTVPDTRSASRPLADRVEELLATGGPLPIVAAGDPVLRRGAEPYDGQLGPGLLARFVEALRLTMHAAPGVGLAAPQVGVGLRIAVIEDPAPVPEEVGAVRGRVPQPFRVLVNPSYEAVGSDRAAFFEGCLSVPGWQAVVARPARVRLTALDEHGRAVDEEFTGWPARIVQHETDHLDGMLYLDRAELRSLSSNEAMALRWSQPTPERAAAALGFALPD.

2 residues coordinate Fe cation: C135 and H177. Residue E178 is part of the active site. Fe cation is bound at residue H181.

This sequence belongs to the polypeptide deformylase family. Fe(2+) is required as a cofactor.

It carries out the reaction N-terminal N-formyl-L-methionyl-[peptide] + H2O = N-terminal L-methionyl-[peptide] + formate. Removes the formyl group from the N-terminal Met of newly synthesized proteins. Requires at least a dipeptide for an efficient rate of reaction. N-terminal L-methionine is a prerequisite for activity but the enzyme has broad specificity at other positions. The chain is Peptide deformylase 3 from Streptomyces avermitilis (strain ATCC 31267 / DSM 46492 / JCM 5070 / NBRC 14893 / NCIMB 12804 / NRRL 8165 / MA-4680).